The following is a 147-amino-acid chain: Prefoldin subunit alpha (147 aa).

It belongs to the prefoldin alpha subunit family. As to quaternary structure, heterohexamer of two alpha and four beta subunits.

It localises to the cytoplasm. Molecular chaperone capable of stabilizing a range of proteins. Seems to fulfill an ATP-independent, HSP70-like function in archaeal de novo protein folding. This chain is Prefoldin subunit alpha, found in Thermococcus onnurineus (strain NA1).